Consider the following 352-residue polypeptide: MSDPVFFPFAGPISLGEVAALAGAALPAGLDGTLAVAGAAPLESAGPDDLAYMDNAKYAEALGRTRARACLVSPRFAARVPEGTAALVTPQPYRGFAQVLARLFPSAARPGSLFGATGVSPGSFVHPEARLEPGVVVDPGVVIGPGAEIGSGTVLAAGAVVGPGTRIGRGCAIGPGASLLHALVGNRVIVHGGARIGQDGFGFAMGAGGHLKVPQVGRVIIQDDVEIGANTTIDRGASRDTIVGEGTKIDNLVQIAHNVVIGRHCVIVAQVGISGSTTLEDYVVLGGQVGVVGHLRIGMGAQIAGSSNINKDVPPGARWGGTPAKPVREWFREMTTLKRLAARERGPEDTDG.

The active-site Proton acceptor is the H257.

This sequence belongs to the transferase hexapeptide repeat family. LpxD subfamily. Homotrimer.

It carries out the reaction a UDP-3-O-[(3R)-3-hydroxyacyl]-alpha-D-glucosamine + a (3R)-hydroxyacyl-[ACP] = a UDP-2-N,3-O-bis[(3R)-3-hydroxyacyl]-alpha-D-glucosamine + holo-[ACP] + H(+). It functions in the pathway bacterial outer membrane biogenesis; LPS lipid A biosynthesis. Its function is as follows. Catalyzes the N-acylation of UDP-3-O-acylglucosamine using 3-hydroxyacyl-ACP as the acyl donor. Is involved in the biosynthesis of lipid A, a phosphorylated glycolipid that anchors the lipopolysaccharide to the outer membrane of the cell. The chain is UDP-3-O-acylglucosamine N-acyltransferase from Methylobacterium sp. (strain 4-46).